Consider the following 259-residue polypeptide: Protein LEAD-SENSITIVE 1 (259 aa).

The 149-residue stretch at 20-168 folds into the LRAT domain; that stretch reads YSWRTAYIYA…CKTALLVLEG (149 aa). Catalysis depends on residues histidine 30 and histidine 42. Catalysis depends on cysteine 152, which acts as the Acyl-thioester intermediate.

As to expression, highly expressed in inflorescences, siliques and stems, and, to a lower extent, in roots and leaves.

Its subcellular location is the cytoplasm. Its function is as follows. Confers tolerance to lead ions (Pb) stress mediated by Pb(NO(3))(2) probably by promoting Pb accumulation leading to subsequent glutathione-dependent phytochelatin (PC) synthesis and related gene expression, including PDR12/ABCG40, GSH1, GSH2, GR1, GR2, PCS1 and PCS2. The polypeptide is Protein LEAD-SENSITIVE 1 (Arabidopsis thaliana (Mouse-ear cress)).